Consider the following 391-residue polypeptide: Formate-dependent phosphoribosylglycinamide formyltransferase (391 aa).

Residues 18-19 (EL) and glutamate 78 contribute to the N(1)-(5-phospho-beta-D-ribosyl)glycinamide site. ATP-binding positions include arginine 110, lysine 151, 156–161 (SSGKGQ), 191–194 (EEFI), and glutamate 199. The ATP-grasp domain maps to 115 to 305 (ELAHEELGIR…EFELHLRAIL (191 aa)). 2 residues coordinate Mg(2+): glutamate 264 and glutamate 276. N(1)-(5-phospho-beta-D-ribosyl)glycinamide-binding positions include aspartate 283, lysine 353, and 360 to 361 (RR).

It belongs to the PurK/PurT family. Homodimer.

The enzyme catalyses N(1)-(5-phospho-beta-D-ribosyl)glycinamide + formate + ATP = N(2)-formyl-N(1)-(5-phospho-beta-D-ribosyl)glycinamide + ADP + phosphate + H(+). It functions in the pathway purine metabolism; IMP biosynthesis via de novo pathway; N(2)-formyl-N(1)-(5-phospho-D-ribosyl)glycinamide from N(1)-(5-phospho-D-ribosyl)glycinamide (formate route): step 1/1. Involved in the de novo purine biosynthesis. Catalyzes the transfer of formate to 5-phospho-ribosyl-glycinamide (GAR), producing 5-phospho-ribosyl-N-formylglycinamide (FGAR). Formate is provided by PurU via hydrolysis of 10-formyl-tetrahydrofolate. The chain is Formate-dependent phosphoribosylglycinamide formyltransferase from Trichormus variabilis (strain ATCC 29413 / PCC 7937) (Anabaena variabilis).